Consider the following 210-residue polypeptide: BAG family molecular chaperone regulator 2 (210 aa).

Position 2 is an N-acetylalanine (Ala2). Residues Ser20, Ser31, and Ser73 each carry the phosphoserine modification. Residues Ser20 to Ile60 are a coiled coil. A BAG domain is found at Ser109–Lys189.

In terms of assembly, binds to the ATPase domain of HSP/HSC70 chaperones. May interact with NWD1. Interacts with HSPA1A (via NBD), HSPA1B (via NBD) and HSPA8. May interact with DNJC9; the interaction seems to be histone-dependent.

Functionally, co-chaperone for HSP70 and HSC70 chaperone proteins. Acts as a nucleotide-exchange factor (NEF) promoting the release of ADP from the HSP70 and HSC70 proteins thereby triggering client/substrate protein release. In Mus musculus (Mouse), this protein is BAG family molecular chaperone regulator 2 (Bag2).